A 353-amino-acid polypeptide reads, in one-letter code: Cytochrome c biogenesis protein CcsA (353 aa).

8 helical membrane-spanning segments follow: residues 15 to 35 (FAIL…PNLP), 37 to 57 (LAAL…TLLG), 68 to 88 (LSNL…VHLI), 97 to 117 (LVGV…TMTL), 142 to 162 (VMML…AFLI), 261 to 281 (IIGL…VWAN), 288 to 308 (WSWD…AAYL), and 322 to 342 (AILA…VNLL).

Belongs to the CcmF/CycK/Ccl1/NrfE/CcsA family. May interact with ccs1.

It localises to the cellular thylakoid membrane. Required during biogenesis of c-type cytochromes (cytochrome c6 and cytochrome f) at the step of heme attachment. The sequence is that of Cytochrome c biogenesis protein CcsA from Nostoc punctiforme (strain ATCC 29133 / PCC 73102).